The primary structure comprises 750 residues: (13E)-labda-7,13-dien-15-ol synthase (750 aa).

7 residues coordinate Mg(2+): D284, D286, D501, D505, N647, T651, and E655. The short motif at 284–287 is the DXDD motif element; sequence DIDD. The DDXXD motif motif lies at 501–505; sequence DDLAD.

Belongs to the terpene synthase family. The cofactor is Mg(2+).

The enzyme catalyses geranylgeranyl diphosphate + H2O = (13E)-labda-7,13-dien-15-ol + diphosphate. It functions in the pathway secondary metabolite biosynthesis; terpenoid biosynthesis. In terms of biological role, bifunctional diterpene synthase that directly generates the endocyclic double bond, as well as the hydroxyl group: produces an endocyclic double bond isomer of copalyl diphosphate (CPP), and carries out subsequent replacement of the diphosphate by a hydroxyl group to form (13E)-labda-7,13-dien-15-ol. The chain is (13E)-labda-7,13-dien-15-ol synthase from Selaginella moellendorffii (Spikemoss).